The sequence spans 500 residues: MELQISSAIIILVVTYTISLLIIKQWRKPKPQENLPPGPPKLPLIGHLHLLWGKLPQHALASVAKQYGPVAHVQLGEVFSVVLSSREATKEAMKLVDPACADRFESIGTKIMWYDNDDIIFSPYSVHWRQMRKICVSELLSARNVRSFGFIRQDEVSRLLGHLRSSAAAGEAVDLTERIATLTCSIICRAAFGSVIRDHEELVELVKDALSMASGFELADMFPSSKLLNLLCWNKSKLWRMRRRVDAILEAIVEEHKLKKSGEFGGEDIIDVLFRMQKDSQIKVPITTNAIKAFIFDTFSAGTETSSTTTLWVMAELMRNPEVMAKAQAEVRAALKGKTDWDVDDVQELKYMKSVVKETMRMHPPIPLIPRSCREECEVNGYTIPNKARIMINVWSMGRNPLYWEKPETFWPERFDQVSRDFMGNDFEFIPFGAGRRICPGLNFGLANVEVPLAQLLYHFDWKLAEGMNPSDMDMSEAEGLTGIRKNNLLLVPTPYDPSS.

A helical; Signal-anchor for type II membrane protein membrane pass occupies residues 3–23 (LQISSAIIILVVTYTISLLII). Cysteine 439 contacts heme.

This sequence belongs to the cytochrome P450 family. It depends on heme as a cofactor.

It localises to the endoplasmic reticulum membrane. The enzyme catalyses (4S)-limonene + reduced [NADPH--hemoprotein reductase] + O2 = (1S,6R)-isopiperitenol + oxidized [NADPH--hemoprotein reductase] + H2O + H(+). Its function is as follows. Hydroxylates (-)-(4S)-limonene to (-)-trans-isopiperitenol, a precursor of (-)-menthol, responsible for the cooling sensation of peppermint. This Mentha piperita (Peppermint) protein is Cytochrome P450 71D13 (CYP71D13).